The primary structure comprises 350 residues: Serine/threonine-protein kinase SRK2F (350 aa).

Residues 4 to 260 (YDILRDLGSG…VPEIEKHPWF (257 aa)) form the Protein kinase domain. ATP contacts are provided by residues 10–18 (LGSGNFGVA) and K33. The Proton acceptor role is filled by D123. The stretch at 270–303 (EEEKCDNGVEEEEEEEEKCRQSVEEIVKIIEEAR) forms a coiled coil.

This sequence belongs to the protein kinase superfamily. Ser/Thr protein kinase family. Expressed in seedlings.

It carries out the reaction L-seryl-[protein] + ATP = O-phospho-L-seryl-[protein] + ADP + H(+). It catalyses the reaction L-threonyl-[protein] + ATP = O-phospho-L-threonyl-[protein] + ADP + H(+). The protein is Serine/threonine-protein kinase SRK2F (SRK2F) of Arabidopsis thaliana (Mouse-ear cress).